A 237-amino-acid polypeptide reads, in one-letter code: Sugar fermentation stimulation protein homolog (237 aa).

Belongs to the SfsA family.

This is Sugar fermentation stimulation protein homolog from Pseudomonas putida (strain W619).